A 137-amino-acid polypeptide reads, in one-letter code: Large ribosomal subunit protein uL16 (137 aa).

Residues 1–19 (MLSPKKVKFRKQQRGRRTG) show a composition bias toward basic residues. Positions 1-20 (MLSPKKVKFRKQQRGRRTGT) are disordered.

It belongs to the universal ribosomal protein uL16 family. In terms of assembly, part of the 50S ribosomal subunit.

Its function is as follows. Binds 23S rRNA and is also seen to make contacts with the A and possibly P site tRNAs. This chain is Large ribosomal subunit protein uL16, found in Desulfosudis oleivorans (strain DSM 6200 / JCM 39069 / Hxd3) (Desulfococcus oleovorans).